Reading from the N-terminus, the 631-residue chain is MEPAAGFLSPRPFPRAAVPSAPPAGPGPPANASPRSEPEVLAGPRAPDPPGRLITDPLSGRTYTKGRLLGKGGFARCYEATDTESGIAYAVKVIPQSRVAKPHQREKILNEIELHRDLQHRHIVRFSHHFEDADNIYIFLELCSRKSLAHIWKARHTLLEPEVRYYLRQILSGLKYLHQRGILHRDLKLGNFFITDNMELKVGDFGLAARLEPPEQRKKTICGTPNYVAPEVLLRQGHGPEADVWSLGCVMYTLLCGSPPFETADLKETYRCIKQVHYTLPASLSLPARQLLAAILRASPRDRPSIEQILRHDFFTKGYTPDRLPVSSCVTVPDLTPPNPARSLFAKVTKSLFGRKKNKNKNHSEDQDNVSCLAPVVSGQAPASLIETAAEDSSPRGTLASSGDGFEEGLTVATVVESALCALRNCVAFMPPAEQNPAPLAQPEPLVWVSKWVDYSNKFGFGYQLSSRRVAVLFNDGTHMALSANRKTVHYNPTSTKHFSFSMGSVPRALQPQLGILRYFASYMEQHLMKGGDLPSVEEAEVPAPPLLLQWVKTDQALLMLFSDGTVQVNFYGDHTKLILSGWEPLLVTFVARNRSACTYLASHLRQLGCSPDLRQRLRYALRLLRDQSPA.

The interval 1–59 (MEPAAGFLSPRPFPRAAVPSAPPAGPGPPANASPRSEPEVLAGPRAPDPPGRLITDPLS) is disordered. A compositionally biased stretch (pro residues) spans 20–31 (SAPPAGPGPPAN). The Protein kinase domain occupies 63 to 315 (YTKGRLLGKG…IEQILRHDFF (253 aa)). Residues 69–77 (LGKGGFARC) and Lys92 each bind ATP. Asp186 (proton acceptor) is an active-site residue. 2 POLO box domains span residues 448-526 (WVSK…YMEQ) and 547-630 (LLLQ…DQSP).

This sequence belongs to the protein kinase superfamily. Ser/Thr protein kinase family. CDC5/Polo subfamily. As to quaternary structure, interacts (via the POLO-box domain) with CIB1; leading to inhibit PLK3 kinase activity. Interacts with GOLGB1. Phosphorylated in an ATM-dependent manner following DNA damage. Phosphorylated as cells enter mitosis and dephosphorylated as cells exit mitosis. As to expression, expressed in skin.

Its subcellular location is the cytoplasm. It is found in the nucleus. It localises to the nucleolus. The protein localises to the golgi apparatus. The protein resides in the cytoskeleton. Its subcellular location is the microtubule organizing center. It is found in the centrosome. It catalyses the reaction L-seryl-[protein] + ATP = O-phospho-L-seryl-[protein] + ADP + H(+). It carries out the reaction L-threonyl-[protein] + ATP = O-phospho-L-threonyl-[protein] + ADP + H(+). Functionally, serine/threonine-protein kinase involved in cell cycle regulation, response to stress and Golgi disassembly. Polo-like kinases act by binding and phosphorylating proteins that are already phosphorylated on a specific motif recognized by the POLO box domains. Phosphorylates ATF2, BCL2L1, CDC25A, CDC25C, CHEK2, HIF1A, JUN, p53/TP53, p73/TP73, PTEN, TOP2A and VRK1. Involved in cell cycle regulation: required for entry into S phase and cytokinesis. Phosphorylates BCL2L1, leading to regulate the G2 checkpoint and progression to cytokinesis during mitosis. Plays a key role in response to stress: rapidly activated upon stress stimulation, such as ionizing radiation, reactive oxygen species (ROS), hyperosmotic stress, UV irradiation and hypoxia. Involved in DNA damage response and G1/S transition checkpoint by phosphorylating CDC25A, p53/TP53 and p73/TP73. Phosphorylates p53/TP53 in response to reactive oxygen species (ROS), thereby promoting p53/TP53-mediated apoptosis. Phosphorylates CHEK2 in response to DNA damage, promoting the G2/M transition checkpoint. Phosphorylates the transcription factor p73/TP73 in response to DNA damage, leading to inhibit p73/TP73-mediated transcriptional activation and pro-apoptotic functions. Phosphorylates HIF1A and JUN is response to hypoxia. Phosphorylates ATF2 following hyperosmotic stress in corneal epithelium. Also involved in Golgi disassembly during the cell cycle: part of a MEK1/MAP2K1-dependent pathway that induces Golgi fragmentation during mitosis by mediating phosphorylation of VRK1. May participate in endomitotic cell cycle, a form of mitosis in which both karyokinesis and cytokinesis are interrupted and is a hallmark of megakaryocyte differentiation, via its interaction with CIB1. The sequence is that of Serine/threonine-protein kinase PLK3 (Plk3) from Mus musculus (Mouse).